We begin with the raw amino-acid sequence, 501 residues long: Dipeptide and tripeptide permease A (501 aa).

At 1–21 (MSTANNKPAESVSLNAFKQPR) the chain is on the cytoplasmic side. Residues 22–44 (AFYLIFSIELWERFGYYGLQGIM) traverse the membrane as a helical segment. The Periplasmic segment spans residues 45 to 59 (AVYLVKQLGMSEADS). The chain crosses the membrane as a helical span at residues 60–80 (ITLFSSFSALVYGLVAIGGWL). Residues 81–89 (GDKVLGTKR) are Cytoplasmic-facing. A helical transmembrane segment spans residues 90-110 (VIMLGAIVLAIGYALVAWSGH). Asp111 is a topological domain (periplasmic). A helical membrane pass occupies residues 112 to 132 (AAIVYMGMATIAVGNGLFKAN). Over 133 to 153 (PSSLLSTCYDKNDPRLDGAFT) the chain is Cytoplasmic. A helical membrane pass occupies residues 154–174 (MYYMSINIGSFFSMLATPWLA). Residues 175-178 (ARFG) lie on the Periplasmic side of the membrane. Residues 179–199 (WSVAFALSVVGMVITIINFAF) form a helical membrane-spanning segment. The Cytoplasmic portion of the chain corresponds to 200–218 (CQKWVKQYGSKPDFAPVHM). Residues 219 to 239 (GKLLATIAGVVVLVAIATWLL) form a helical membrane-spanning segment. The Periplasmic portion of the chain corresponds to 240–246 (HNQGIAR). Residues 247 to 267 (MVLGVVALGIVVIFAKETIGL) form a helical membrane-spanning segment. The Cytoplasmic portion of the chain corresponds to 268 to 274 (KGAARRK). The helical transmembrane segment at 275–295 (MIVAFLLMVEAIVFFVLYSQM) threads the bilayer. At 296 to 320 (PTSLNFFAIRNVEHSILGIAFEPEQ) the chain is on the periplasmic side. The helical transmembrane segment at 321–341 (YQALNPFWIMIGSPILAAIYN) threads the bilayer. Residues 342–352 (KMGDRLPMPHK) lie on the Cytoplasmic side of the membrane. The chain crosses the membrane as a helical span at residues 353–373 (FAIGMVLCSGAFLVLPLGAKF). At 374-383 (ASDAGIVSVN) the chain is on the periplasmic side. Residues 384-404 (WLILSYALQSIGELMISGLGL) traverse the membrane as a helical segment. The Cytoplasmic portion of the chain corresponds to 405–414 (AMVAQLVPQR). A helical membrane pass occupies residues 415-435 (LMGFIMGSWFLTTAGAAIIAG). Over 436 to 459 (KIANLMAVPENVTDPLVSLEVYGH) the chain is Periplasmic. Residues 460-480 (VFLQIGIVTAVIAALMLLTAP) form a helical membrane-spanning segment. The Cytoplasmic portion of the chain corresponds to 481-501 (KLNRMTQDDSADLKARETAAA).

It belongs to the major facilitator superfamily. Proton-dependent oligopeptide transporter (POT/PTR) (TC 2.A.17) family. DtpA subfamily.

Its subcellular location is the cell inner membrane. In terms of biological role, proton-dependent permease that transports di- and tripeptides. The protein is Dipeptide and tripeptide permease A of Klebsiella pneumoniae (strain 342).